A 199-amino-acid polypeptide reads, in one-letter code: Small ribosomal subunit protein mS38 (199 aa).

The protein belongs to the mitochondrion-specific ribosomal protein mS38 family. In terms of assembly, component of the mitochondrial small ribosomal subunit (mt-SSU). Mature mammalian 55S mitochondrial ribosomes consist of a small (28S) and a large (39S) subunit. The 28S small subunit contains a 12S ribosomal RNA (12S mt-rRNA) and 30 different proteins. The 39S large subunit contains a 16S rRNA (16S mt-rRNA), a copy of mitochondrial valine transfer RNA (mt-tRNA(Val)), which plays an integral structural role, and 52 different proteins. Interacts with Aurora-A. In terms of tissue distribution, ubiquitously expressed and especially highly expressed in heart, skeletal muscle and testis.

It is found in the mitochondrion matrix. The protein resides in the nucleus. Functionally, may act as a negative regulator of Aurora-A kinase, by down-regulation through proteasome-dependent degradation. In Homo sapiens (Human), this protein is Small ribosomal subunit protein mS38 (AURKAIP1).